Reading from the N-terminus, the 381-residue chain is RING-H2 finger protein ATL1 (381 aa).

The segment at 1–31 (MDLTDRRNPFNNLVFPPPPPPPSTTFTSPIF) is disordered. Residues 46–66 (IAVIGILATAFLLVSYYIFVI) traverse the membrane as a helical segment. The RING-type; atypical zinc-finger motif lies at 134-176 (CSVCLNEFQEDEKLRIIPNCCHVFHIDCIDIWLQGNANCPLCR). 2 disordered regions span residues 249 to 269 (TSNE…PIKF) and 334 to 354 (RQIP…GNSR). Over residues 250-261 (SNEVSTGNSPKS) the composition is skewed to polar residues.

This sequence belongs to the RING-type zinc finger family. ATL subfamily.

It localises to the membrane. The catalysed reaction is S-ubiquitinyl-[E2 ubiquitin-conjugating enzyme]-L-cysteine + [acceptor protein]-L-lysine = [E2 ubiquitin-conjugating enzyme]-L-cysteine + N(6)-ubiquitinyl-[acceptor protein]-L-lysine.. It participates in protein modification; protein ubiquitination. This is RING-H2 finger protein ATL1 (ATL1) from Arabidopsis thaliana (Mouse-ear cress).